An 87-amino-acid chain; its full sequence is Small ribosomal subunit protein uS15 (87 aa).

The protein belongs to the universal ribosomal protein uS15 family. In terms of assembly, part of the 30S ribosomal subunit. Forms a bridge to the 50S subunit in the 70S ribosome, contacting the 23S rRNA.

Functionally, one of the primary rRNA binding proteins, it binds directly to 16S rRNA where it helps nucleate assembly of the platform of the 30S subunit by binding and bridging several RNA helices of the 16S rRNA. Its function is as follows. Forms an intersubunit bridge (bridge B4) with the 23S rRNA of the 50S subunit in the ribosome. The chain is Small ribosomal subunit protein uS15 from Dehalococcoides mccartyi (strain ATCC BAA-2100 / JCM 16839 / KCTC 5957 / BAV1).